Reading from the N-terminus, the 250-residue chain is MSGHSKWATTKHKKAVIDAKRGKLFAKLIKNIEVAARMGGVDIEGNPTLYDAIQKAKKQSVPNKNIDSAVKRGGGLEAGGADYETIMYEGYGPNGVAVLIECLTDNRNRAASDVRVAMTRNGGSMADPGSVSYLFNRKGVVIVPKGELAEDDVLGAVLDAGAEEVNDLGESFEVLSEATDLVAVRTALQEAGIDYESADANFVPTMQVELDEEGARKIFRLIDALEDSDDVQNVFANFDVSDEIMEKVDA.

This sequence belongs to the TACO1 family.

The protein localises to the cytoplasm. This is Probable transcriptional regulatory protein SCO1521 from Streptomyces coelicolor (strain ATCC BAA-471 / A3(2) / M145).